Here is a 147-residue protein sequence, read N- to C-terminus: MVHLTGDEKAAVTALWGKVNVEDVGGEALGRLLVVYPWTQRFFESFGDLSTPDAVMNNPKVKAHGKKVLGAFSDGLAHLDNLKGTFAQLSELHCDKLHVDPENFRLLGNVLVCVLAHHFGKEFTPQVQAAYQKVVAGVANALAHKYH.

The residue at position 2 (valine 2) is an N-acetylvaline. Residues 3–147 (HLTGDEKAAV…VANALAHKYH (145 aa)) enclose the Globin domain. Threonine 13 carries the phosphothreonine modification. Serine 45 carries the post-translational modification Phosphoserine. Lysine 60 carries the post-translational modification N6-acetyllysine. Histidine 64 lines the heme b pocket. Residue lysine 83 is modified to N6-acetyllysine. Residue histidine 93 participates in heme b binding. At cysteine 94 the chain carries S-nitrosocysteine. An N6-acetyllysine modification is found at lysine 145.

Belongs to the globin family. Heterotetramer of two alpha chains and two beta chains. Red blood cells.

Functionally, involved in oxygen transport from the lung to the various peripheral tissues. The sequence is that of Hemoglobin subunit beta (HBB) from Saimiri sciureus (Common squirrel monkey).